A 33-amino-acid chain; its full sequence is Protamine-1A (33 aa).

The disordered stretch occupies residues 1 to 33; sequence PRRRRSSSRPVRRRRRPRRVSRRRRRRGGRRRR.

As to expression, testis.

The protein localises to the nucleus. Its subcellular location is the chromosome. Functionally, protamines substitute for histones in the chromatin of sperm during the haploid phase of spermatogenesis. They compact sperm DNA into a highly condensed, stable and inactive complex. This chain is Protamine-1A, found in Oncorhynchus mykiss (Rainbow trout).